Here is a 184-residue protein sequence, read N- to C-terminus: dTTP/UTP pyrophosphatase (184 aa).

Asp67 serves as the catalytic Proton acceptor.

This sequence belongs to the Maf family. YhdE subfamily. A divalent metal cation serves as cofactor.

The protein localises to the cytoplasm. It carries out the reaction dTTP + H2O = dTMP + diphosphate + H(+). The catalysed reaction is UTP + H2O = UMP + diphosphate + H(+). In terms of biological role, nucleoside triphosphate pyrophosphatase that hydrolyzes dTTP and UTP. May have a dual role in cell division arrest and in preventing the incorporation of modified nucleotides into cellular nucleic acids. The sequence is that of dTTP/UTP pyrophosphatase from Elusimicrobium minutum (strain Pei191).